A 119-amino-acid chain; its full sequence is UPF0212 protein Mlab_0931 (119 aa).

The protein belongs to the UPF0212 family.

This chain is UPF0212 protein Mlab_0931, found in Methanocorpusculum labreanum (strain ATCC 43576 / DSM 4855 / Z).